Here is a 570-residue protein sequence, read N- to C-terminus: Pyruvate decarboxylase (570 aa).

A propeptide spans 1-2 (MV) (removed in mature form). Residues Asp-33 and His-120 each contribute to the substrate site. The segment at 394-476 (DSWFNGIQLK…MLINNRGYTI (83 aa)) is thiamine pyrophosphate binding. Mg(2+)-binding residues include Asp-444, Asn-471, and Gly-473. Substrate is bound at residue Glu-477.

It belongs to the TPP enzyme family. In terms of assembly, homomer. Requires a metal cation as cofactor. Thiamine diphosphate is required as a cofactor.

The protein resides in the cytoplasm. The enzyme catalyses a 2-oxocarboxylate + H(+) = an aldehyde + CO2. It functions in the pathway carbohydrate metabolism; pyruvate metabolism. The protein is Pyruvate decarboxylase (cfp) of Neurospora crassa (strain ATCC 24698 / 74-OR23-1A / CBS 708.71 / DSM 1257 / FGSC 987).